Reading from the N-terminus, the 293-residue chain is NAD kinase (293 aa).

Asp-68 functions as the Proton acceptor in the catalytic mechanism. NAD(+)-binding positions include 68-69, 142-143, Arg-153, Asp-172, and 183-188; these read DG, ND, and TAYSLS.

It belongs to the NAD kinase family. Requires a divalent metal cation as cofactor.

It is found in the cytoplasm. The catalysed reaction is NAD(+) + ATP = ADP + NADP(+) + H(+). Involved in the regulation of the intracellular balance of NAD and NADP, and is a key enzyme in the biosynthesis of NADP. Catalyzes specifically the phosphorylation on 2'-hydroxyl of the adenosine moiety of NAD to yield NADP. This chain is NAD kinase, found in Lachnospira eligens (strain ATCC 27750 / DSM 3376 / VPI C15-48 / C15-B4) (Eubacterium eligens).